Consider the following 220-residue polypeptide: NADH-quinone oxidoreductase subunit I (220 aa).

2 4Fe-4S ferredoxin-type domains span residues 71–102 (LQRL…IITH) and 112–141 (DSYT…MGNR). Residues cysteine 82, cysteine 85, cysteine 88, cysteine 92, cysteine 121, cysteine 124, cysteine 127, and cysteine 131 each coordinate [4Fe-4S] cluster. The tract at residues 189-220 (ATPLDYVQEPSKEESKKETPTSPEANKGDENV) is disordered. The span at 198–207 (PSKEESKKET) shows a compositional bias: basic and acidic residues.

Belongs to the complex I 23 kDa subunit family. NDH-1 is composed of 14 different subunits. Subunits NuoA, H, J, K, L, M, N constitute the membrane sector of the complex. [4Fe-4S] cluster is required as a cofactor.

The protein resides in the cell inner membrane. The enzyme catalyses a quinone + NADH + 5 H(+)(in) = a quinol + NAD(+) + 4 H(+)(out). In terms of biological role, NDH-1 shuttles electrons from NADH, via FMN and iron-sulfur (Fe-S) centers, to quinones in the respiratory chain. The immediate electron acceptor for the enzyme in this species is believed to be ubiquinone. Couples the redox reaction to proton translocation (for every two electrons transferred, four hydrogen ions are translocated across the cytoplasmic membrane), and thus conserves the redox energy in a proton gradient. The polypeptide is NADH-quinone oxidoreductase subunit I (Helicobacter acinonychis (strain Sheeba)).